A 495-amino-acid polypeptide reads, in one-letter code: Cysteine-rich secretory protein LCCL domain-containing 2 (495 aa).

An N-terminal signal peptide occupies residues 1–22; the sequence is MSCLLNNMVLMGLALLVCGVQA. Asparagine 27 carries N-linked (GlcNAc...) asparagine glycosylation. Positions 60-200 constitute an SCP domain; that stretch reads LMLHNKLRGQ…ENAVYLVCNY (141 aa). LCCL domains lie at 282–377 and 383–486; these read MTQV…SSSF and TETA…QNGN. Disulfide bonds link cysteine 288/cysteine 306, cysteine 310/cysteine 330, cysteine 389/cysteine 411, and cysteine 415/cysteine 438.

Binds to heparin, dermatan sulfate and chondroitin sulfate. In terms of tissue distribution, present in kidney renal tubules (at protein level).

The protein localises to the secreted. Functionally, promotes matrix assembly. The protein is Cysteine-rich secretory protein LCCL domain-containing 2 (Crispld2) of Mus musculus (Mouse).